A 295-amino-acid chain; its full sequence is Cytidine deaminase (295 aa).

CMP/dCMP-type deaminase domains follow at residues 48 to 168 (TDNQ…FGPS) and 187 to 295 (EDDD…YLSL). 89–91 (NME) is a binding site for substrate. H102 serves as a coordination point for Zn(2+). The Proton donor role is filled by E104. C129 and C132 together coordinate Zn(2+).

Belongs to the cytidine and deoxycytidylate deaminase family. Homodimer. Zn(2+) serves as cofactor.

It catalyses the reaction cytidine + H2O + H(+) = uridine + NH4(+). The catalysed reaction is 2'-deoxycytidine + H2O + H(+) = 2'-deoxyuridine + NH4(+). Its function is as follows. This enzyme scavenges exogenous and endogenous cytidine and 2'-deoxycytidine for UMP synthesis. The chain is Cytidine deaminase from Vibrio vulnificus (strain CMCP6).